The chain runs to 989 residues: Bifunctional glutamine synthetase adenylyltransferase/adenylyl-removing enzyme (989 aa).

The tract at residues 1 to 474 (MNSSAIDADI…HYGKLFEGDP (474 aa)) is adenylyl removase. The interval 480-989 (LPIDYAGGPD…FNRLIGGDSA (510 aa)) is adenylyl transferase.

It belongs to the GlnE family. Requires Mg(2+) as cofactor.

The catalysed reaction is [glutamine synthetase]-O(4)-(5'-adenylyl)-L-tyrosine + phosphate = [glutamine synthetase]-L-tyrosine + ADP. It carries out the reaction [glutamine synthetase]-L-tyrosine + ATP = [glutamine synthetase]-O(4)-(5'-adenylyl)-L-tyrosine + diphosphate. Functionally, involved in the regulation of glutamine synthetase GlnA, a key enzyme in the process to assimilate ammonia. When cellular nitrogen levels are high, the C-terminal adenylyl transferase (AT) inactivates GlnA by covalent transfer of an adenylyl group from ATP to specific tyrosine residue of GlnA, thus reducing its activity. Conversely, when nitrogen levels are low, the N-terminal adenylyl removase (AR) activates GlnA by removing the adenylyl group by phosphorolysis, increasing its activity. The regulatory region of GlnE binds the signal transduction protein PII (GlnB) which indicates the nitrogen status of the cell. This Rhodopseudomonas palustris (strain BisB5) protein is Bifunctional glutamine synthetase adenylyltransferase/adenylyl-removing enzyme.